We begin with the raw amino-acid sequence, 274 residues long: Uridine-5'-phosphate dioxygenase (274 aa).

Fe cation-binding residues include His-103, Asp-105, and His-246.

The cofactor is Fe(2+).

The catalysed reaction is UMP + 2-oxoglutarate + O2 = uridine-5'-aldehyde + succinate + phosphate + CO2. It participates in antibiotic biosynthesis. Its activity is regulated as follows. Inhibited by several divalent cations, including Zn(2+). Functionally, dioxygenase involved in the biosynthesis of the lipopeptidyl nucleoside antibiotic A-90289. Catalyzes the dephosphorylation and oxidation of UMP to generate uridine-5'-aldehyde, the first intermediate in the biosynthesis of A-90289. This chain is Uridine-5'-phosphate dioxygenase, found in Streptomyces sp.